We begin with the raw amino-acid sequence, 570 residues long: Urease subunit alpha (570 aa).

Positions 131–570 (GGFDSHIHFI…LPLAQRYFMF (440 aa)) constitute a Urease domain. Residues H136, H138, and K219 each contribute to the Ni(2+) site. K219 is subject to N6-carboxylysine. H221 is a substrate binding site. The Ni(2+) site is built by H248 and H274. Residue H322 is the Proton donor of the active site. Position 362 (D362) interacts with Ni(2+).

It belongs to the metallo-dependent hydrolases superfamily. Urease alpha subunit family. As to quaternary structure, heterotrimer of UreA (gamma), UreB (beta) and UreC (alpha) subunits. Three heterotrimers associate to form the active enzyme. Requires Ni cation as cofactor. Post-translationally, carboxylation allows a single lysine to coordinate two nickel ions.

The protein resides in the cytoplasm. It carries out the reaction urea + 2 H2O + H(+) = hydrogencarbonate + 2 NH4(+). The protein operates within nitrogen metabolism; urea degradation; CO(2) and NH(3) from urea (urease route): step 1/1. The chain is Urease subunit alpha from Rhodopseudomonas palustris (strain TIE-1).